Consider the following 316-residue polypeptide: Transaldolase (316 aa).

Lysine 125 serves as the catalytic Schiff-base intermediate with substrate.

It belongs to the transaldolase family. Type 1 subfamily. In terms of assembly, homodimer.

The protein resides in the cytoplasm. The catalysed reaction is D-sedoheptulose 7-phosphate + D-glyceraldehyde 3-phosphate = D-erythrose 4-phosphate + beta-D-fructose 6-phosphate. Its pathway is carbohydrate degradation; pentose phosphate pathway; D-glyceraldehyde 3-phosphate and beta-D-fructose 6-phosphate from D-ribose 5-phosphate and D-xylulose 5-phosphate (non-oxidative stage): step 2/3. Transaldolase is important for the balance of metabolites in the pentose-phosphate pathway. The polypeptide is Transaldolase (Verminephrobacter eiseniae (strain EF01-2)).